We begin with the raw amino-acid sequence, 130 residues long: uncharacterized protein (130 aa).

The interval 1–34 is disordered; the sequence is MTAVGGSPPTRRCPATEDRAPATVATPSSTDPTA.

To M.tuberculosis Rv1583c.

This is an uncharacterized protein from Mycobacterium tuberculosis (strain CDC 1551 / Oshkosh).